Reading from the N-terminus, the 453-residue chain is MIGFSFSIVTSWSALSGVLVVGVESGGPPVMIWSWVGVCAVSLAVAYSMAEMCSAYPVAGGQYSWVAILAPKKWARGLSYVCGWFMLIGILSMGAVNNFIAGNFVLGMANLTYPEYTIERWHAVLVAYLICIVAALSSIFLPHLLNRISKAILIWNICSFFICFITILATNDHKQPASFVFADFQNSTGFNKAYAAIIGILQSAFGMCCYDAPAHMTEEIKDARKQAPRAIVMSVWLGFLTGFVFLISLCFCMGGIDETASTPTGVPLIAIFHNSTGSVAGTCALTSLITVVALVCANSLMTEGGRAVYAFARDRGLPFSRALSRVHPTLGVPVAGILATAAVQAAFNSIYFGTVTGFNTVISIATEGFYVSYAIPLLVRILSRVSGDKRERLDGPYSLGRWGLLANVVGFTYLAFAVITFNFPTVDPVDKENMNYTSAASFKFIQDISNQAE.

Transmembrane regions (helical) follow at residues isoleucine 2 to valine 21, valine 30 to alanine 50, and valine 81 to alanine 101. N-linked (GlcNAc...) asparagine glycosylation occurs at asparagine 110. Helical transmembrane passes span tryptophan 121–leucine 141 and alanine 151–asparagine 171. Asparagine 186 carries an N-linked (GlcNAc...) asparagine glycan. 2 helical membrane-spanning segments follow: residues alanine 193–proline 213 and isoleucine 231–phenylalanine 251. Asparagine 274 carries N-linked (GlcNAc...) asparagine glycosylation. A run of 4 helical transmembrane segments spans residues glycine 277–alanine 297, leucine 330–isoleucine 350, phenylalanine 358–leucine 378, and glycine 403–phenylalanine 423. N-linked (GlcNAc...) asparagine glycosylation is present at asparagine 435.

It belongs to the amino acid-polyamine-organocation (APC) superfamily.

The protein localises to the membrane. The sequence is that of Putative amino acid/polyamine transporter MPH_07630_2 from Macrophomina phaseolina (strain MS6) (Charcoal rot fungus).